The primary structure comprises 493 residues: Glutamyl-tRNA(Gln) amidotransferase subunit A (493 aa).

Active-site charge relay system residues include K78 and S159. S183 acts as the Acyl-ester intermediate in catalysis.

It belongs to the amidase family. GatA subfamily. Heterotrimer of A, B and C subunits.

It catalyses the reaction L-glutamyl-tRNA(Gln) + L-glutamine + ATP + H2O = L-glutaminyl-tRNA(Gln) + L-glutamate + ADP + phosphate + H(+). Allows the formation of correctly charged Gln-tRNA(Gln) through the transamidation of misacylated Glu-tRNA(Gln) in organisms which lack glutaminyl-tRNA synthetase. The reaction takes place in the presence of glutamine and ATP through an activated gamma-phospho-Glu-tRNA(Gln). The sequence is that of Glutamyl-tRNA(Gln) amidotransferase subunit A from Sphingopyxis alaskensis (strain DSM 13593 / LMG 18877 / RB2256) (Sphingomonas alaskensis).